The sequence spans 351 residues: Photosystem II D2 protein (351 aa).

The helical transmembrane segment at 39-59 (TAYLAIGGWLTGTTFVTSWYT) threads the bilayer. Histidine 116 serves as a coordination point for chlorophyll a. A helical membrane pass occupies residues 123–139 (GFMLRQFELARLIGIRP). Pheophytin a-binding residues include glutamine 128 and asparagine 141. The helical transmembrane segment at 151–164 (VFVSVFLLYPLGQS) threads the bilayer. Histidine 196 lines the chlorophyll a pocket. A helical membrane pass occupies residues 206–226 (GALLSAIHGVTVENTLYEDGE). 2 residues coordinate a plastoquinone: histidine 213 and phenylalanine 260. Histidine 213 is a Fe cation binding site. Histidine 267 is a Fe cation binding site. The helical transmembrane segment at 277-293 (GLWTSSIGIIGLALNLR) threads the bilayer.

It belongs to the reaction center PufL/M/PsbA/D family. As to quaternary structure, PSII is composed of 1 copy each of membrane proteins PsbA, PsbB, PsbC, PsbD, PsbE, PsbF, PsbH, PsbI, PsbJ, PsbK, PsbL, PsbM, PsbT, PsbX, PsbY, PsbZ, Psb30/Ycf12, peripheral proteins PsbO, CyanoQ (PsbQ), PsbU, PsbV and a large number of cofactors. It forms dimeric complexes. It depends on The D1/D2 heterodimer binds P680, chlorophylls that are the primary electron donor of PSII, and subsequent electron acceptors. It shares a non-heme iron and each subunit binds pheophytin, quinone, additional chlorophylls, carotenoids and lipids. There is also a Cl(-1) ion associated with D1 and D2, which is required for oxygen evolution. The PSII complex binds additional chlorophylls, carotenoids and specific lipids. as a cofactor.

The protein localises to the host cellular thylakoid membrane. The enzyme catalyses 2 a plastoquinone + 4 hnu + 2 H2O = 2 a plastoquinol + O2. Its function is as follows. Photosystem II (PSII) is a light-driven water:plastoquinone oxidoreductase that uses light energy to abstract electrons from H(2)O, generating O(2) and a proton gradient subsequently used for ATP formation. It consists of a core antenna complex that captures photons, and an electron transfer chain that converts photonic excitation into a charge separation. The D1/D2 (PsbA/PsbD) reaction center heterodimer binds P680, the primary electron donor of PSII as well as several subsequent electron acceptors. D2 is needed for assembly of a stable PSII complex. The sequence is that of Photosystem II D2 protein (psbD) from Synechococcus.